A 329-amino-acid polypeptide reads, in one-letter code: N-acetyl-gamma-glutamyl-phosphate reductase (329 aa).

Residue C155 is part of the active site.

Belongs to the NAGSA dehydrogenase family. Type 1 subfamily.

Its subcellular location is the cytoplasm. It catalyses the reaction N-acetyl-L-glutamate 5-semialdehyde + phosphate + NADP(+) = N-acetyl-L-glutamyl 5-phosphate + NADPH + H(+). Its pathway is amino-acid biosynthesis; L-arginine biosynthesis; N(2)-acetyl-L-ornithine from L-glutamate: step 3/4. In terms of biological role, catalyzes the NADPH-dependent reduction of N-acetyl-5-glutamyl phosphate to yield N-acetyl-L-glutamate 5-semialdehyde. In Shewanella pealeana (strain ATCC 700345 / ANG-SQ1), this protein is N-acetyl-gamma-glutamyl-phosphate reductase.